The chain runs to 678 residues: Putative pentatricopeptide repeat-containing protein At3g18840 (678 aa).

16 PPR repeats span residues 22-56 (TAVS…NVYS), 57-84 (WNAV…NCER), 85-116 (DLIT…MHRK), 124-158 (DDFT…GNDG), 159-190 (TKFA…CVEF), 192-222 (DSVA…NPEL), 224-258 (DTIS…GLKW), 259-293 (DEHS…GSYS), 294-324 (NKFV…YGFG), 325-359 (NLYS…NLVV), 360-390 (WTAM…ETNT), 392-426 (DSLV…GILM), 427-457 (DKKL…SFER), 458-492 (DTVM…GFKP), 493-528 (DEIT…NISP), and 529-563 (ETGH…EKDA). The tract at residues 565–640 (ILGAFLNACS…FSGCSWANID (76 aa)) is type E motif. The interval 641 to 671 (KQFHMFTSSDISHYETEAIYAMLHFVTKDLS) is type E(+) motif.

Belongs to the PPR family. PCMP-E subfamily.

This Arabidopsis thaliana (Mouse-ear cress) protein is Putative pentatricopeptide repeat-containing protein At3g18840 (PCMP-E92).